A 485-amino-acid chain; its full sequence is MTVRVRLAPSPTGNLHIGTARTAVFNWLYARHRGGKFILRIEDTDRERSRPEYTENILEGLQWLGLTWDEGPYFQSDRLDLYRQAIQTLLDKGLAYYCYCTPEELEALRAEQKAKGQAPRYDNRHRHLTPEEQAAFEAAGRTPVIRFKIEDDRQIEWQDLVRGRVSWQGADLGGDMVIARAAPRGEIGYPLYNLVVVVDDIAMGITDVIRGEDHIGNTPKQILLYEALGATPPNFAHTPLILNSTGQKLSKRDGVTSISDFRAMGYLAPALANYMTLLGWSPPEGVGELFTLDLAAKHFSFERINKAGARFDWDKLNWLNRQYIQQLEPEEFLAELIPLWQGAGYAFDEERDRPWLFDLAQLLQPGLNTLREAIDQGAVFFIPSVTFDSEAMAQLGQPQSATILAYLLEHLPAEPALTVAMGQQLIQQAAKAAGVKKGATMRTLRAALTGAVHGPDLMAAWQILHQRGWDEPRLAAALKQAQTTS.

L-glutamate is bound at residue R6. The short motif at 9–19 is the 'HIGH' region element; it reads PSPTGNLHIGT. L-glutamate is bound by residues Y192 and 210–214; that span reads RGEDH. Positions 248-252 match the 'KMSKS' region motif; it reads KLSKR. Residue K251 participates in ATP binding.

The protein belongs to the class-I aminoacyl-tRNA synthetase family. Glutamate--tRNA ligase type 1 subfamily. As to quaternary structure, monomer. Does not require zinc. is required as a cofactor.

It is found in the cytoplasm. It catalyses the reaction tRNA(Glu) + L-glutamate + ATP = L-glutamyl-tRNA(Glu) + AMP + diphosphate. Non-discriminating glutamyl-tRNA synthetase. Catalyzes the attachment of glutamate to tRNA(Glu) in a two-step reaction: glutamate is first activated by ATP to form Glu-AMP and then transferred to the acceptor end of tRNA(Glu). Acylates both tRNA(Glu) and tRNA(Gln) with glutamate, but has 13-fold higher efficiency with tRNA(Glu). The protein is Glutamate--tRNA ligase (gltX) of Thermosynechococcus vestitus (strain NIES-2133 / IAM M-273 / BP-1).